A 356-amino-acid chain; its full sequence is Probable G-protein coupled receptor 32 (356 aa).

Residues Met1–Pro44 lie on the Extracellular side of the membrane. N-linked (GlcNAc...) asparagine glycosylation occurs at Asn30. The helical transmembrane segment at Leu45 to Met67 threads the bilayer. At Thr68–Thr78 the chain is on the cytoplasmic side. The helical transmembrane segment at Val79–Tyr100 threads the bilayer. The Extracellular portion of the chain corresponds to Tyr101–Leu116. An intrachain disulfide couples Cys114 to Cys191. The helical transmembrane segment at Tyr117 to Val137 threads the bilayer. Over Asp138–Gln156 the chain is Cytoplasmic. Residues Arg157–Lys178 form a helical membrane-spanning segment. The Extracellular portion of the chain corresponds to Phe179–His220. An N-linked (GlcNAc...) asparagine glycan is attached at Asn199. The chain crosses the membrane as a helical span at residues Phe221–Ala241. Residues Lys242 to Leu257 lie on the Cytoplasmic side of the membrane. A helical membrane pass occupies residues Leu258–Leu280. At Trp281–Ala300 the chain is on the extracellular side. Residues Ser301 to Gly320 form a helical membrane-spanning segment. Residues Arg321–Glu356 are Cytoplasmic-facing.

This sequence belongs to the G-protein coupled receptor 1 family. In terms of tissue distribution, expressed in resting primary human macrophages.

It is found in the cell membrane. In terms of biological role, G-protein coupled receptor that binds to several ligands including resolvin D1 (RvD1) with high affinity, leading to rapid and transient activation of numerous intracellular signaling pathways. In macrophages, enhances the RvD1-stimulated phagocytic and clearance functions. Macrophages migrate less toward different chemoattractant stimuli but phagocytose more microbial particles. Prevents the increase in Ca(2+) and activation of ERK1/2 used by histamine and its H1 receptor subtype to induce goblet cell secretion by activating PKC and GRK2 to counter-regulate the histamine receptor. In Homo sapiens (Human), this protein is Probable G-protein coupled receptor 32 (GPR32).